We begin with the raw amino-acid sequence, 727 residues long: Synaptic vesicle glycoprotein 2C (727 aa).

The interaction with SYT1 stretch occupies residues 1-57; the sequence is MEDSYKDRTSLMKGAKDIAKEVKKQTVKKVNQAVDRAQDEYTQRSYSRFQDEEDDDD. The Cytoplasmic portion of the chain corresponds to 1-154; it reads MEDSYKDRTS…CGHGRFQWAL (154 aa). The segment at 22–128 is disordered; it reads VKKQTVKKVN…DRRELESERR (107 aa). Phosphoserine occurs at positions 75 and 76. Threonine 79 is subject to Phosphothreonine. The span at 113–128 shows a compositional bias: basic and acidic residues; sequence KGDEYKDRRELESERR. A helical membrane pass occupies residues 155-175; it reads FFVLGMALMADGVEVFVVGFV. Residues 176–191 are Extracellular-facing; the sequence is LPSAETDLCIPNSGSG. A helical transmembrane segment spans residues 192–212; sequence WLGSIVYLGMMVGAFFWGGLA. Over 213-226 the chain is Cytoplasmic; the sequence is DKVGRKQSLLICMS. The chain crosses the membrane as a helical span at residues 227–247; that stretch reads VNGFFAFLSSFVQGYGFFLVC. Position 248 (arginine 248) is a topological domain, extracellular. A helical membrane pass occupies residues 249–269; that stretch reads LLSGFGIGGAIPTVFSYFAEV. At 270 to 280 the chain is on the cytoplasmic side; that stretch reads LAREKRGEHLS. Residues 281–301 form a helical membrane-spanning segment; sequence WLCMFWMIGGIYASAMAWAII. Over 302–320 the chain is Extracellular; it reads PHYGWSFSMGSAYQFHSWR. The helical transmembrane segment at 321–341 threads the bilayer; it reads VFVIVCALPCVSSVVALTFMP. The Cytoplasmic segment spans residues 342 to 437; sequence ESPRFLLEVG…PVRENTIKLT (96 aa). Residues 438 to 458 traverse the membrane as a helical segment; the sequence is IVWFTLSFGYYGLSVWFPDVI. The Extracellular portion of the chain corresponds to 459–578; sequence KHLQSDEYAL…CQITFDDDYS (120 aa). Tyrosine 466 carries the phosphotyrosine modification. N-linked (GlcNAc...) asparagine glycans are attached at residues asparagine 480, asparagine 484, asparagine 534, asparagine 559, and asparagine 565. Residues 579–599 traverse the membrane as a helical segment; it reads AYWIYFVNFLGTLAVLPGNIV. Residues 600 to 609 lie on the Cytoplasmic side of the membrane; it reads SALLMDRIGR. A helical transmembrane segment spans residues 610 to 630; sequence LTMLGGSMVLSGISCFFLWFG. The Extracellular segment spans residues 631 to 636; that stretch reads TSESMM. A helical membrane pass occupies residues 637–657; the sequence is IGMLCLYNGLTISAWNSLDVV. The Cytoplasmic portion of the chain corresponds to 658–670; it reads TVELYPTDRRATG. The chain crosses the membrane as a helical span at residues 671 to 693; that stretch reads FGFLNALCKAAAVLGNLIFGSLV. Over 694-697 the chain is Extracellular; it reads SITK. The helical transmembrane segment at 698 to 716 threads the bilayer; that stretch reads AIPILLASTVLVCGGLVGL. At 717–727 the chain is on the cytoplasmic side; sequence RLPDTRTQVLM.

It belongs to the major facilitator superfamily. In terms of assembly, interacts with SYT1 in a calcium-dependent manner. As to quaternary structure, (Microbial infection) Interacts with C.botulinum neurotoxin type A (BoNT/A, botA). (Microbial infection) Interacts with C.botulinum neurotoxin type D (BoNT/D, botD). Post-translationally, N-glycosylated. As to expression, expressed in specific subsets of conventional synapses in the retina (at protein level). Expressed in diaphragm motor nerve terminals (at protein level). Expressed in a subset of hippocampus neurons (at protein level).

It is found in the cytoplasmic vesicle. The protein resides in the secretory vesicle. Its subcellular location is the synaptic vesicle membrane. Its function is as follows. Plays a role in the control of regulated secretion in neural and endocrine cells, enhancing selectively low-frequency neurotransmission. Positively regulates vesicle fusion by maintaining the readily releasable pool of secretory vesicles. Functionally, (Microbial infection) Receptor for C.botulinum neurotoxin type A (BoNT/A, botA); the toxin binds Sv2c via extracellular loop 4. (Microbial infection) Possible receptor for C.botulinum neurotoxin type D (BoNT/D, botD). This is Synaptic vesicle glycoprotein 2C (Sv2c) from Mus musculus (Mouse).